The following is a 136-amino-acid chain: Small ribosomal subunit protein uS9 (136 aa).

Positions 95-136 (GLSPDNRKPLKTEGHLSRDPRSKERKKYGLKKARKAGQFSKR) are disordered. The segment covering 99 to 116 (DNRKPLKTEGHLSRDPRS) has biased composition (basic and acidic residues). Residues 117–136 (KERKKYGLKKARKAGQFSKR) are compositionally biased toward basic residues.

Belongs to the universal ribosomal protein uS9 family.

This chain is Small ribosomal subunit protein uS9, found in Prochlorococcus marinus subsp. pastoris (strain CCMP1986 / NIES-2087 / MED4).